A 343-amino-acid chain; its full sequence is MQSPPPDPLGDCLRNWEDLQQDFQGIQETHRLYRVKLEELTKLQDNCTNSITRQKKRLQELALVLKKCRPSLPSESLEAAQELESQIKERQGLFFDMEAYLPKKNGLYLSLVLGNVNVTLLSKQAKFAYKDEYEKFKLYLTIILIVISFTCRFLLNSRVTDAAFNFLLVWYYCTLTIRESILINNGSRIKGWWVFHHYVSTFLSGVMLTWPDGLMYQKFRNQFLSFSMYQSFVQFLQYYYQSGCLYRLRALGERHTMDLTVEGFQSWMWRGLTFLLPFLFFGHFWQLFNALTLFNLARDPECKEWQVLMCGLPFLLLFLGNFFTTLRVVHQKFHSQQHGSKKD.

At 1-132 the chain is on the cytoplasmic side; sequence MQSPPPDPLG…KQAKFAYKDE (132 aa). Residue K130 participates in CoA binding. A helical transmembrane segment spans residues 133 to 152; the sequence is YEKFKLYLTIILIVISFTCR. Residues 153–158 lie on the Extracellular side of the membrane; that stretch reads FLLNSR. A helical transmembrane segment spans residues 159–177; that stretch reads VTDAAFNFLLVWYYCTLTI. Residues 178-190 are Cytoplasmic-facing; that stretch reads RESILINNGSRIK. The CoA site is built by S187 and R188. Residues 191-209 form a helical membrane-spanning segment; that stretch reads GWWVFHHYVSTFLSGVMLT. Residues 210–218 lie on the Extracellular side of the membrane; that stretch reads WPDGLMYQK. A helical transmembrane segment spans residues 219–240; sequence FRNQFLSFSMYQSFVQFLQYYY. Residues Q237, Y240, Q241, and H283 each coordinate CoA. At 241–270 the chain is on the cytoplasmic side; the sequence is QSGCLYRLRALGERHTMDLTVEGFQSWMWR. A helical transmembrane segment spans residues 271–294; sequence GLTFLLPFLFFGHFWQLFNALTLF. Residues 295 to 304 lie on the Extracellular side of the membrane; the sequence is NLARDPECKE. A helical membrane pass occupies residues 305 to 330; it reads WQVLMCGLPFLLLFLGNFFTTLRVVH. The Cytoplasmic segment spans residues 331-343; it reads QKFHSQQHGSKKD. K332 is a CoA binding site.

This sequence belongs to the TMEM120 family. As to quaternary structure, homodimer. Forms heterooligomer with TMEM120B. Interacts with PKD2; TMEM120A inhibits PKD2 channel activity through the physical association of PKD2 with TMEM120A.

It localises to the cell membrane. It is found in the nucleus inner membrane. The protein localises to the endoplasmic reticulum. Multifunctional protein involved in mechanosensation, and plays an essential role in lipid metabolism and adipocyte differentiation. May function as a potential ion channel involved in sensing mechanical stimuli. Mediates the mechanosensitivity of the PKD2-TMEM120A channel complex through direct physical interaction. TMEM120A seems to affect mechanosensation by inhibiting PIEZO2 channels, possibly by altering cellular lipid content. TMEM120A is structurally similar to a lipid-modifying enzyme, ELOVL7, and contains a bound coenzyme A molecule, which suggests it might function as an enzyme in lipid metabolism. Additionnaly, implicated in innate immune response against Zika virus. Acts as a key activator of the antiviral signaling involving STING1. The chain is Transmembrane protein 120A from Rattus norvegicus (Rat).